The chain runs to 73 residues: U-scoloptoxin(15)-Sm2a (73 aa).

Positions 1 to 20 (MKFYIVFCLFVVLLINFAAA) are cleaved as a signal peptide. 2 cysteine pairs are disulfide-bonded: Cys39/Cys66 and Cys43/Cys68.

Belongs to the scoloptoxin-15 family. Expressed by the venom gland.

Its subcellular location is the secreted. Functionally, activity unknown, even that a lot of targets (Kv, Nav, Cav) have been tested and activities on insects and mice have been tested. This is U-scoloptoxin(15)-Sm2a from Scolopendra morsitans (Tanzanian blue ringleg centipede).